A 258-amino-acid polypeptide reads, in one-letter code: Acetylglutamate kinase (258 aa).

Substrate is bound by residues 41–42 (GG), Arg63, and Asn156.

This sequence belongs to the acetylglutamate kinase family. ArgB subfamily.

The protein localises to the cytoplasm. The catalysed reaction is N-acetyl-L-glutamate + ATP = N-acetyl-L-glutamyl 5-phosphate + ADP. It participates in amino-acid biosynthesis; L-arginine biosynthesis; N(2)-acetyl-L-ornithine from L-glutamate: step 2/4. Catalyzes the ATP-dependent phosphorylation of N-acetyl-L-glutamate. This Geobacillus kaustophilus (strain HTA426) protein is Acetylglutamate kinase.